A 130-amino-acid polypeptide reads, in one-letter code: MIGNWNYGTGRRKTSVARVFIKKGSGKIVVNGKPVDEFFARETGRMIVCQPLELTGHLESFDIKVNVHGGGETGQAGAVRHGITRALIDYDAALKPALSQAGFVTRDAREVERKKVGFRKARRRKQFSKR.

It belongs to the universal ribosomal protein uS9 family.

The sequence is that of Small ribosomal subunit protein uS9 from Bordetella parapertussis (strain 12822 / ATCC BAA-587 / NCTC 13253).